A 719-amino-acid polypeptide reads, in one-letter code: Histone-lysine N-methyltransferase SETDB2 (719 aa).

Residues 72 to 82 show a composition bias toward polar residues; sequence SQKEVNAQSSD. Residues 72-102 form a disordered region; sequence SQKEVNAQSSDPMPVTQKEQENKSNAFPSTS. The 73-residue stretch at 157–229 folds into the MBD domain; the sequence is LNLKGENPLQ…DNFSFNTYVQ (73 aa). The Pre-SET domain occupies 291-364; sequence DSCDCSEGCI…LCQNRVVQHG (74 aa). The Zn(2+) site is built by cysteine 293, cysteine 295, cysteine 299, cysteine 305, cysteine 307, cysteine 345, cysteine 349, cysteine 351, and cysteine 356. Residues 367–694 enclose the SET domain; that stretch reads VRLQVFKTEQ…ARTELTWDYG (328 aa). S-adenosyl-L-methionine is bound by residues 377 to 379 and aspartate 418; that span reads KGW. The disordered stretch occupies residues 508–547; that stretch reads FVSSESVTPEDNDGFKPPREHLNSKTKGAQKDSSSNHVDE. Basic and acidic residues predominate over residues 520–530; sequence DGFKPPREHLN. Residues 532-543 are compositionally biased toward polar residues; the sequence is KTKGAQKDSSSN. S-adenosyl-L-methionine-binding positions include arginine 648 and 651 to 652; that span reads NH. Cysteine 654, cysteine 707, cysteine 709, and cysteine 714 together coordinate Zn(2+).

The protein belongs to the class V-like SAM-binding methyltransferase superfamily. As to expression, ubiquitous. Highest expression in heart, testis and ovary.

The protein localises to the nucleus. It is found in the chromosome. It carries out the reaction N(6),N(6)-dimethyl-L-lysyl(9)-[histone H3] + S-adenosyl-L-methionine = N(6),N(6),N(6)-trimethyl-L-lysyl(9)-[histone H3] + S-adenosyl-L-homocysteine + H(+). In terms of biological role, histone methyltransferase involved in left-right axis specification in early development and mitosis. Specifically trimethylates 'Lys-9' of histone H3 (H3K9me3). H3K9me3 is a specific tag for epigenetic transcriptional repression that recruits HP1 (CBX1, CBX3 and/or CBX5) proteins to methylated histones. Contributes to H3K9me3 in both the interspersed repetitive elements and centromere-associated repeats. Plays a role in chromosome condensation and segregation during mitosis. In Homo sapiens (Human), this protein is Histone-lysine N-methyltransferase SETDB2 (SETDB2).